Reading from the N-terminus, the 350-residue chain is Eukaryotic translation initiation factor 3 subunit I (350 aa).

WD repeat units follow at residues Gly8 to Glu49, His51 to Thr89, Glu91 to Thr135, Gln149 to Ser188, Glu198 to Lys240, and Gly296 to Tyr335.

This sequence belongs to the eIF-3 subunit I family. As to quaternary structure, component of the eukaryotic translation initiation factor 3 (eIF-3) complex.

Its subcellular location is the cytoplasm. Component of the eukaryotic translation initiation factor 3 (eIF-3) complex, which is involved in protein synthesis of a specialized repertoire of mRNAs and, together with other initiation factors, stimulates binding of mRNA and methionyl-tRNAi to the 40S ribosome. The eIF-3 complex specifically targets and initiates translation of a subset of mRNAs involved in cell proliferation. This Scheffersomyces stipitis (strain ATCC 58785 / CBS 6054 / NBRC 10063 / NRRL Y-11545) (Yeast) protein is Eukaryotic translation initiation factor 3 subunit I.